Reading from the N-terminus, the 201-residue chain is Homeobox protein ceh-28 (201 aa).

Over residues 72–84 (SYYSSPSQNQRSY) the composition is skewed to polar residues. Residues 72 to 94 (SYYSSPSQNQRSYQNHRQHSNPD) form a disordered region. A DNA-binding region (homeobox) is located at residues 104 to 163 (KRKPRVLFTQHQVNELEERFKKQRYVTATEREELAQCLGLTATQVKIWFQNRRYKCKRLA).

The protein belongs to the NK-2 homeobox family.

Its subcellular location is the nucleus. Probable transcription factor that regulates neuronal differention, including synapse assembly of the cholinergic motor neuron M4. Activates expression of growth factor, neuropeptide and transcription factor genes, such as TGF-beta dbl-1, FMRFamide-like flp-5 and transcription repressor zag-1, in the M4 neuron. Required for pharynx peristalsis. This Caenorhabditis elegans protein is Homeobox protein ceh-28.